Here is a 334-residue protein sequence, read N- to C-terminus: Ornithine carbamoyltransferase (334 aa).

Carbamoyl phosphate is bound by residues 57-60, glutamine 84, arginine 108, and 135-138; these read STRT and HPTQ. L-ornithine contacts are provided by residues asparagine 169, aspartate 233, and 237–238; that span reads SM. Carbamoyl phosphate is bound by residues 275 to 276 and arginine 320; that span reads CL.

This sequence belongs to the aspartate/ornithine carbamoyltransferase superfamily. OTCase family.

It localises to the cytoplasm. It catalyses the reaction carbamoyl phosphate + L-ornithine = L-citrulline + phosphate + H(+). It participates in amino-acid biosynthesis; L-arginine biosynthesis; L-arginine from L-ornithine and carbamoyl phosphate: step 1/3. In terms of biological role, reversibly catalyzes the transfer of the carbamoyl group from carbamoyl phosphate (CP) to the N(epsilon) atom of ornithine (ORN) to produce L-citrulline. This is Ornithine carbamoyltransferase from Aeromonas salmonicida (strain A449).